A 331-amino-acid polypeptide reads, in one-letter code: Ferredoxin--NADP reductase 2 (331 aa).

Glutamate 37, glutamine 45, tyrosine 50, valine 90, phenylalanine 124, aspartate 286, and threonine 327 together coordinate FAD.

It belongs to the ferredoxin--NADP reductase type 2 family. Homodimer. FAD is required as a cofactor.

It catalyses the reaction 2 reduced [2Fe-2S]-[ferredoxin] + NADP(+) + H(+) = 2 oxidized [2Fe-2S]-[ferredoxin] + NADPH. This chain is Ferredoxin--NADP reductase 2, found in Listeria welshimeri serovar 6b (strain ATCC 35897 / DSM 20650 / CCUG 15529 / CIP 8149 / NCTC 11857 / SLCC 5334 / V8).